A 354-amino-acid polypeptide reads, in one-letter code: Ferredoxin--NADP reductase 2 (354 aa).

8 residues coordinate FAD: Thr-14, Asp-33, Gln-41, Tyr-46, Ala-86, Phe-121, Asp-289, and Thr-330.

It belongs to the ferredoxin--NADP reductase type 2 family. In terms of assembly, homodimer. The cofactor is FAD.

It carries out the reaction 2 reduced [2Fe-2S]-[ferredoxin] + NADP(+) + H(+) = 2 oxidized [2Fe-2S]-[ferredoxin] + NADPH. This Christiangramia forsetii (strain DSM 17595 / CGMCC 1.15422 / KT0803) (Gramella forsetii) protein is Ferredoxin--NADP reductase 2.